Consider the following 470-residue polypeptide: Acetyl-CoA decarbonylase/synthase complex subunit gamma 2 (470 aa).

Residues Met-1–Asp-60 enclose the 4Fe-4S domain. 4 residues coordinate [4Fe-4S] cluster: Cys-18, Cys-21, Cys-26, and Cys-43.

As to quaternary structure, heterodimer of delta and gamma chains. The ACDS complex is made up of alpha, epsilon, beta, gamma and delta chains with a probable stoichiometry of (alpha(2)epsilon(2))(4)-beta(8)-(gamma(1)delta(1))(8). Corrinoid is required as a cofactor. [4Fe-4S] cluster serves as cofactor.

The enzyme catalyses 5,6,7,8-tetrahydrosarcinapterin + methyl-Co(III)-[corrinoid Fe-S protein] = 5-methyltetrahydrosarcinapterin + Co(I)-[corrinoid Fe-S protein] + H(+). It participates in one-carbon metabolism; methanogenesis from acetate. Part of a complex that catalyzes the reversible cleavage of acetyl-CoA, allowing growth on acetate as sole source of carbon and energy. This is Acetyl-CoA decarbonylase/synthase complex subunit gamma 2 from Methanosarcina mazei (strain ATCC BAA-159 / DSM 3647 / Goe1 / Go1 / JCM 11833 / OCM 88) (Methanosarcina frisia).